Here is a 274-residue protein sequence, read N- to C-terminus: Orotidine 5'-phosphate decarboxylase (274 aa).

Substrate-binding positions include aspartate 40, 62–64 (KTH), 93–102 (DRKFVDIGNT), tyrosine 227, and arginine 245. The Proton donor role is filled by lysine 95.

It belongs to the OMP decarboxylase family.

The catalysed reaction is orotidine 5'-phosphate + H(+) = UMP + CO2. It participates in pyrimidine metabolism; UMP biosynthesis via de novo pathway; UMP from orotate: step 2/2. The sequence is that of Orotidine 5'-phosphate decarboxylase (URA3) from Coccidioides posadasii (strain RMSCC 757 / Silveira) (Valley fever fungus).